We begin with the raw amino-acid sequence, 447 residues long: MLNSIFIIFCLIAVSAFFSISEISLAASRKIKLKLLADEGSINAQRVLKMQENPGMFFTVVQIGLNAVAILGGIVGDAAFSPAFSALFSHYMSPELSEQLSFILSFSLVTGLFILFADLTPKRIGMIAPEAVALRIINPMRFCLFVFRPLVWLFNGMANNIFRLFKIPMVRKDDITSDDIYAVVEAGALAGVLRKQEHELIENVFELESRTVPSSMTSRESIIWFDLHEDEQSLKKKVAEHPHSKFLVCNEDIDHIIGYVDSKDLLNRVLANQSMALNSGVQIRNTLIVPDTLTLSEALESFKTAGEDFAVIMNEYALVVGIITLNDVMTTLMGDLVGQGLEEQIVARDENSWLVDGGTPIDDVMRVLDIDEFPQSGNYETIGGFMMFMLRKIPKRTDSVKFSGYKFEVVDIDNYRIDQLLVTRLDNKSNVPAPKLPDAQGKEDSAA.

At 1–4 (MLNS) the chain is on the cytoplasmic side. In terms of domain architecture, CNNM transmembrane spans 1–197 (MLNSIFIIFC…ALAGVLRKQE (197 aa)). Residues 5–25 (IFIIFCLIAVSAFFSISEISL) form a helical membrane-spanning segment. At 26–54 (AASRKIKLKLLADEGSINAQRVLKMQENP) the chain is on the periplasmic side. The helical transmembrane segment at 55 to 75 (GMFFTVVQIGLNAVAILGGIV) threads the bilayer. The Cytoplasmic segment spans residues 76–99 (GDAAFSPAFSALFSHYMSPELSEQ). Residues 100–120 (LSFILSFSLVTGLFILFADLT) form a helical membrane-spanning segment. Residues 121–141 (PKRIGMIAPEAVALRIINPMR) lie on the Periplasmic side of the membrane. The helical transmembrane segment at 142–162 (FCLFVFRPLVWLFNGMANNIF) threads the bilayer. The Cytoplasmic segment spans residues 163–447 (RLFKIPMVRK…DAQGKEDSAA (285 aa)). CBS domains lie at 216–275 (MTSR…NQSM) and 282–343 (QIRN…GLEE).

It belongs to the UPF0053 family. PaeA subfamily.

Its subcellular location is the cell inner membrane. Its function is as follows. Involved in cadaverine and putrescine tolerance in stationary phase. May facilitate the efflux of both cadaverine and putrescine from the cytoplasm, reducing potentially toxic levels under certain stress conditions. In Salmonella typhimurium (strain 14028s / SGSC 2262), this protein is Polyamine export protein.